Reading from the N-terminus, the 126-residue chain is Holo-[acyl-carrier-protein] synthase (126 aa).

Mg(2+) is bound by residues aspartate 9 and glutamate 59.

This sequence belongs to the P-Pant transferase superfamily. AcpS family. Mg(2+) serves as cofactor.

The protein resides in the cytoplasm. The enzyme catalyses apo-[ACP] + CoA = holo-[ACP] + adenosine 3',5'-bisphosphate + H(+). In terms of biological role, transfers the 4'-phosphopantetheine moiety from coenzyme A to a Ser of acyl-carrier-protein. The protein is Holo-[acyl-carrier-protein] synthase of Myxococcus xanthus (strain DK1622).